Here is a 219-residue protein sequence, read N- to C-terminus: Octanoyltransferase (219 aa).

Residues 32-207 (ASSPDQLWIV…TFSHNLGYQN (176 aa)) enclose the BPL/LPL catalytic domain. Substrate-binding positions include 71 to 78 (RGGQVTYH), 138 to 140 (SLG), and 151 to 153 (GLA). Catalysis depends on Cys-169, which acts as the Acyl-thioester intermediate.

It belongs to the LipB family.

Its subcellular location is the cytoplasm. It catalyses the reaction octanoyl-[ACP] + L-lysyl-[protein] = N(6)-octanoyl-L-lysyl-[protein] + holo-[ACP] + H(+). It functions in the pathway protein modification; protein lipoylation via endogenous pathway; protein N(6)-(lipoyl)lysine from octanoyl-[acyl-carrier-protein]: step 1/2. Its function is as follows. Catalyzes the transfer of endogenously produced octanoic acid from octanoyl-acyl-carrier-protein onto the lipoyl domains of lipoate-dependent enzymes. Lipoyl-ACP can also act as a substrate although octanoyl-ACP is likely to be the physiological substrate. This chain is Octanoyltransferase, found in Shewanella sediminis (strain HAW-EB3).